Reading from the N-terminus, the 726-residue chain is Catalase-peroxidase (726 aa).

Residues 1 to 12 are compositionally biased toward polar residues; that stretch reads MSTPSDQHNTLS. Residues 1–34 are disordered; that stretch reads MSTPSDQHNTLSAGKCPFHQGNSNQTAGGGTSSR. A cross-link (tryptophyl-tyrosyl-methioninium (Trp-Tyr) (with M-252)) is located at residues 105-226; the sequence is WHSAGTYRSA…LGATEMGLIY (122 aa). Residue H106 is the Proton acceptor of the active site. Positions 226-252 form a cross-link, tryptophyl-tyrosyl-methioninium (Tyr-Met) (with W-105); the sequence is YVNPEGPNHSGDPASAAPAIRATFGNM. H267 is a binding site for heme b.

Belongs to the peroxidase family. Peroxidase/catalase subfamily. Homodimer or homotetramer. It depends on heme b as a cofactor. Post-translationally, formation of the three residue Trp-Tyr-Met cross-link is important for the catalase, but not the peroxidase activity of the enzyme.

The enzyme catalyses H2O2 + AH2 = A + 2 H2O. The catalysed reaction is 2 H2O2 = O2 + 2 H2O. In terms of biological role, bifunctional enzyme with both catalase and broad-spectrum peroxidase activity. This chain is Catalase-peroxidase, found in Cronobacter sakazakii (strain ATCC BAA-894) (Enterobacter sakazakii).